A 389-amino-acid polypeptide reads, in one-letter code: MGQNLSTSNPLGFFPDHQLDPAFRANTANPDWDFNPNKDSWPDANKVGAGAFGLGFTPPHGGLLGWSPQAQGILQTLPANPPPASTNRQSGRQPTPLSPPLRNTHPQAMQWNSTTFHQTLQDPRVRGLYLPAGGSSSGTVNPVPTTVSPISSIFSRIGDPALNMENITSGFLGPLLVLQAGFFLLTKILTIPKSLDSWWTSLNFLGGTTVCLGQNSQSPTSNHSPTSCPPTCPGYRWMCLRRFIIFLFILLLCLIFLLVLLDYQGMLPVCPLIPGSSTTSTGPCRTCTTPAQGTSMYPSCCCTKPSDGNCTCIPIPSSWAFGKFLWEWASARFSWLSLLVPFVQWFVGLSPTVWLLVIWMMWYWGPKLFTILSPFLPLLPIFFCLWVYI.

The residue at position 1 (Met-1) is an N-acetylmethionine. Gly-2 carries N-myristoyl glycine; by host lipidation. The interval 2–108 (GQNLSTSNPL…PPLRNTHPQA (107 aa)) is pre-S1. The interval 2 to 163 (GQNLSTSNPL…FSRIGDPALN (162 aa)) is pre-S. At 2–170 (GQNLSTSNPL…ALNMENITSG (169 aa)) the chain is on the virion surface; in external conformation side. The Intravirion; in internal conformation portion of the chain corresponds to 2 to 242 (GQNLSTSNPL…PGYRWMCLRR (241 aa)). Positions 76–103 (TLPANPPPASTNRQSGRQPTPLSPPLRN) are disordered. A compositionally biased stretch (polar residues) spans 85–95 (STNRQSGRQPT). The interval 109–163 (MQWNSTTFHQTLQDPRVRGLYLPAGGSSSGTVNPVPTTVSPISSIFSRIGDPALN) is pre-S2. Residues 171–191 (FLGPLLVLQAGFFLLTKILTI) traverse the membrane as a helical segment. Topologically, residues 192–242 (PKSLDSWWTSLNFLGGTTVCLGQNSQSPTSNHSPTSCPPTCPGYRWMCLRR) are intravirion; in external conformation. Residues 243–263 (FIIFLFILLLCLIFLLVLLDY) traverse the membrane as a helical segment. Over 264-337 (QGMLPVCPLI…WASARFSWLS (74 aa)) the chain is Virion surface. Asn-309 is a glycosylation site (N-linked (GlcNAc...) asparagine; by host). A helical membrane pass occupies residues 338 to 358 (LLVPFVQWFVGLSPTVWLLVI). The Intravirion portion of the chain corresponds to 359 to 364 (WMMWYW). A helical transmembrane segment spans residues 365–387 (GPKLFTILSPFLPLLPIFFCLWV). Topologically, residues 388 to 389 (YI) are virion surface.

This sequence belongs to the orthohepadnavirus major surface antigen family. As to quaternary structure, in its internal form (Li-HBsAg), interacts with the capsid protein and with the isoform S. Interacts with host chaperone CANX. In terms of assembly, associates with host chaperone CANX through its pre-S2 N glycan; this association may be essential for isoform M proper secretion. Interacts with isoform L. Interacts with the antigens of satellite virus HDV (HDVAgs); this interaction is required for encapsidation of HDV genomic RNA. Post-translationally, isoform M is N-terminally acetylated by host at a ratio of 90%, and N-glycosylated by host at the pre-S2 region. Myristoylated.

Its subcellular location is the virion membrane. Functionally, the large envelope protein exists in two topological conformations, one which is termed 'external' or Le-HBsAg and the other 'internal' or Li-HBsAg. In its external conformation the protein attaches the virus to cell receptors and thereby initiating infection. This interaction determines the species specificity and liver tropism. This attachment induces virion internalization predominantly through caveolin-mediated endocytosis. The large envelope protein also assures fusion between virion membrane and endosomal membrane. In its internal conformation the protein plays a role in virion morphogenesis and mediates the contact with the nucleocapsid like a matrix protein. In terms of biological role, the middle envelope protein plays an important role in the budding of the virion. It is involved in the induction of budding in a nucleocapsid independent way. In this process the majority of envelope proteins bud to form subviral lipoprotein particles of 22 nm of diameter that do not contain a nucleocapsid. The sequence is that of Large envelope protein from Homo sapiens (Human).